Reading from the N-terminus, the 142-residue chain is ATP synthase F(0) complex subunit C3, mitochondrial (142 aa).

The transit peptide at 1-67 (MFACAKLACT…REFQTSAISR (67 aa)) directs the protein to the mitochondrion. Residues 83-103 (VGVAGSGAGIGTVFGSLIIGY) traverse the membrane as a helical segment. Position 110 is an N6,N6,N6-trimethyllysine (Lys110). A helical transmembrane segment spans residues 118-138 (ILGFALSEAMGLFCLMVAFLI).

The protein belongs to the ATPase C chain family. F-type ATPases have 2 components, CF(1) - the catalytic core - and CF(0) - the membrane proton channel. CF(1) has five subunits: alpha(3), beta(3), gamma(1), delta(1), epsilon(1). CF(0) has three main subunits: a, b and c. Interacts with TMEM70 and TMEM242. Trimethylated by ATPSCKMT at Lys-110. Methylation is required for proper incorporation of the C subunit into the ATP synthase complex and mitochondrial respiration.

Its subcellular location is the mitochondrion membrane. Its function is as follows. Mitochondrial membrane ATP synthase (F(1)F(0) ATP synthase or Complex V) produces ATP from ADP in the presence of a proton gradient across the membrane which is generated by electron transport complexes of the respiratory chain. F-type ATPases consist of two structural domains, F(1) - containing the extramembraneous catalytic core and F(0) - containing the membrane proton channel, linked together by a central stalk and a peripheral stalk. During catalysis, ATP synthesis in the catalytic domain of F(1) is coupled via a rotary mechanism of the central stalk subunits to proton translocation. Part of the complex F(0) domain. A homomeric c-ring of probably 10 subunits is part of the complex rotary element. The sequence is that of ATP synthase F(0) complex subunit C3, mitochondrial from Homo sapiens (Human).